We begin with the raw amino-acid sequence, 760 residues long: Golgin subfamily A member 5 (760 aa).

Topologically, residues Met-1–Arg-727 are cytoplasmic. The segment covering Val-95–Phe-111 has biased composition (polar residues). 3 disordered regions span residues Val-95–Pro-114, Asp-126–Asp-216, and Thr-432–Lys-456. Basic and acidic residues predominate over residues Gln-135–Val-146. Positions Lys-148–Leu-166 are enriched in polar residues. Low complexity predominate over residues Pro-174–Ser-201. Residues Gln-249 to His-668 adopt a coiled-coil conformation. Residues Leu-441–Ser-450 are compositionally biased toward polar residues. Residues Val-728–Tyr-748 form a helical; Anchor for type IV membrane protein membrane-spanning segment. Residues Thr-749–Arg-760 lie on the Extracellular side of the membrane.

It is found in the golgi apparatus membrane. Involved in maintaining Golgi structure. Stimulates the formation of Golgi stacks and ribbons. Involved in intra-Golgi retrograde transport. The protein is Golgin subfamily A member 5 (golga5) of Danio rerio (Zebrafish).